A 232-amino-acid polypeptide reads, in one-letter code: Phosphoribosylformylglycinamidine synthase subunit PurQ (232 aa).

A Glutamine amidotransferase type-1 domain is found at 2 to 232 (KIAILQFGGT…SMVDYITENF (231 aa)). The active-site Nucleophile is the Cys86. Residues His203 and Glu205 contribute to the active site.

In terms of assembly, part of the FGAM synthase complex composed of 1 PurL, 1 PurQ and 2 PurS subunits.

It is found in the cytoplasm. It carries out the reaction N(2)-formyl-N(1)-(5-phospho-beta-D-ribosyl)glycinamide + L-glutamine + ATP + H2O = 2-formamido-N(1)-(5-O-phospho-beta-D-ribosyl)acetamidine + L-glutamate + ADP + phosphate + H(+). It catalyses the reaction L-glutamine + H2O = L-glutamate + NH4(+). The protein operates within purine metabolism; IMP biosynthesis via de novo pathway; 5-amino-1-(5-phospho-D-ribosyl)imidazole from N(2)-formyl-N(1)-(5-phospho-D-ribosyl)glycinamide: step 1/2. In terms of biological role, part of the phosphoribosylformylglycinamidine synthase complex involved in the purines biosynthetic pathway. Catalyzes the ATP-dependent conversion of formylglycinamide ribonucleotide (FGAR) and glutamine to yield formylglycinamidine ribonucleotide (FGAM) and glutamate. The FGAM synthase complex is composed of three subunits. PurQ produces an ammonia molecule by converting glutamine to glutamate. PurL transfers the ammonia molecule to FGAR to form FGAM in an ATP-dependent manner. PurS interacts with PurQ and PurL and is thought to assist in the transfer of the ammonia molecule from PurQ to PurL. The protein is Phosphoribosylformylglycinamidine synthase subunit PurQ of Methanosarcina barkeri (strain Fusaro / DSM 804).